The following is a 177-amino-acid chain: Adenine phosphoribosyltransferase (177 aa).

It belongs to the purine/pyrimidine phosphoribosyltransferase family. As to quaternary structure, homodimer.

The protein resides in the cytoplasm. The enzyme catalyses AMP + diphosphate = 5-phospho-alpha-D-ribose 1-diphosphate + adenine. It participates in purine metabolism; AMP biosynthesis via salvage pathway; AMP from adenine: step 1/1. Functionally, catalyzes a salvage reaction resulting in the formation of AMP, that is energically less costly than de novo synthesis. The chain is Adenine phosphoribosyltransferase from Cutibacterium acnes (strain DSM 16379 / KPA171202) (Propionibacterium acnes).